A 478-amino-acid polypeptide reads, in one-letter code: Aspartyl/glutamyl-tRNA(Asn/Gln) amidotransferase subunit B 1 (478 aa).

Belongs to the GatB/GatE family. GatB subfamily. Heterotrimer of A, B and C subunits.

It catalyses the reaction L-glutamyl-tRNA(Gln) + L-glutamine + ATP + H2O = L-glutaminyl-tRNA(Gln) + L-glutamate + ADP + phosphate + H(+). The catalysed reaction is L-aspartyl-tRNA(Asn) + L-glutamine + ATP + H2O = L-asparaginyl-tRNA(Asn) + L-glutamate + ADP + phosphate + 2 H(+). Functionally, allows the formation of correctly charged Asn-tRNA(Asn) or Gln-tRNA(Gln) through the transamidation of misacylated Asp-tRNA(Asn) or Glu-tRNA(Gln) in organisms which lack either or both of asparaginyl-tRNA or glutaminyl-tRNA synthetases. The reaction takes place in the presence of glutamine and ATP through an activated phospho-Asp-tRNA(Asn) or phospho-Glu-tRNA(Gln). The protein is Aspartyl/glutamyl-tRNA(Asn/Gln) amidotransferase subunit B 1 of Syntrophus aciditrophicus (strain SB).